The following is a 493-amino-acid chain: Ribosomal protein uS12 methylthiotransferase RimO (493 aa).

The MTTase N-terminal domain occupies 5–121 (RTVALVTLGC…ISDRLQTILN (117 aa)). [4Fe-4S] cluster-binding residues include Cys-14, Cys-50, and Cys-84. The interval 153-177 (LPGHGPTDLPEGVAPASGPRAPLRR) is disordered. Positions 179 to 410 (LDGSPVASVK…RLAEELVSQR (232 aa)) constitute a Radical SAM core domain. Residues Cys-193, Cys-197, and Cys-200 each contribute to the [4Fe-4S] cluster site. The TRAM domain maps to 412-482 (DERVGATVRV…GVDLVAEPLL (71 aa)).

The protein belongs to the methylthiotransferase family. RimO subfamily. [4Fe-4S] cluster is required as a cofactor.

Its subcellular location is the cytoplasm. The catalysed reaction is L-aspartate(89)-[ribosomal protein uS12]-hydrogen + (sulfur carrier)-SH + AH2 + 2 S-adenosyl-L-methionine = 3-methylsulfanyl-L-aspartate(89)-[ribosomal protein uS12]-hydrogen + (sulfur carrier)-H + 5'-deoxyadenosine + L-methionine + A + S-adenosyl-L-homocysteine + 2 H(+). Functionally, catalyzes the methylthiolation of an aspartic acid residue of ribosomal protein uS12. In Streptomyces coelicolor (strain ATCC BAA-471 / A3(2) / M145), this protein is Ribosomal protein uS12 methylthiotransferase RimO.